We begin with the raw amino-acid sequence, 137 residues long: Cytochrome c2 (137 aa).

The N-terminal stretch at 1–21 is a signal peptide; that stretch reads MKISLTAATVAALVLAAPAFA. 4 residues coordinate heme c: C34, C37, H38, and M117.

Belongs to the cytochrome c family. In terms of processing, binds 1 heme c group covalently per subunit.

Functionally, cytochrome c2 is found mainly in purple, non-sulfur, photosynthetic bacteria where it functions as the electron donor to the oxidized bacteriochlorophyll in the photophosphorylation pathway. However, it may also have a role in the respiratory chain and is found in some non-photosynthetic bacteria. This Rhodobacter capsulatus (strain ATCC BAA-309 / NBRC 16581 / SB1003) protein is Cytochrome c2 (cycA).